Reading from the N-terminus, the 370-residue chain is Flagellar P-ring protein (370 aa).

Positions 1 to 21 (MKLLLFILMISSIIIVPVGQA) are cleaved as a signal peptide.

Belongs to the FlgI family. As to quaternary structure, the basal body constitutes a major portion of the flagellar organelle and consists of four rings (L,P,S, and M) mounted on a central rod.

It localises to the periplasm. It is found in the bacterial flagellum basal body. In terms of biological role, assembles around the rod to form the L-ring and probably protects the motor/basal body from shearing forces during rotation. This is Flagellar P-ring protein from Pseudoalteromonas atlantica (strain T6c / ATCC BAA-1087).